Reading from the N-terminus, the 105-residue chain is Guanidinium exporter (105 aa).

Residues Met-1–Lys-21 form a helical membrane-spanning segment. Topologically, residues Tyr-22–Arg-28 are cytoplasmic. A helical transmembrane segment spans residues Leu-29 to Ala-49. The Periplasmic portion of the chain corresponds to Met-50–Thr-57. A helical transmembrane segment spans residues Ala-58–Leu-78. Topologically, residues Gly-79–Ser-81 are cytoplasmic. Residues Ala-82 to Leu-102 form a helical membrane-spanning segment. The Periplasmic segment spans residues Ser-103–His-105.

It belongs to the drug/metabolite transporter (DMT) superfamily. Small multidrug resistance (SMR) (TC 2.A.7.1) family. Gdx/SugE subfamily.

The protein localises to the cell inner membrane. Guanidinium ion exporter. Couples guanidinium export to the proton motive force, exchanging one guanidinium ion for two protons. The protein is Guanidinium exporter of Escherichia coli O157:H7.